A 222-amino-acid polypeptide reads, in one-letter code: Charged multivesicular body protein 4b (222 aa).

2 disordered regions span residues 1 to 21 (MSLI…PSPQ) and 177 to 222 (NLLE…WATA). A coiled-coil region spans residues 21-182 (QEAIQKLRDT…ELDKNLLEVQ (162 aa)).

Belongs to the SNF7 family. In terms of assembly, probable core component of the endosomal sorting required for transport complex III (ESCRT-III). ESCRT-III components are thought to multimerize to form a flat lattice on the perimeter membrane of the endosome.

It localises to the cytoplasm. The protein resides in the cytosol. Its subcellular location is the late endosome membrane. It is found in the midbody. Its function is as follows. Probable core component of the endosomal sorting required for transport complex III (ESCRT-III) which is involved in multivesicular bodies (MVBs) formation and sorting of endosomal cargo proteins into MVBs. MVBs contain intraluminal vesicles (ILVs) that are generated by invagination and scission from the limiting membrane of the endosome and mostly are delivered to lysosomes enabling degradation of membrane proteins, such as stimulated growth factor receptors, lysosomal enzymes and lipids. The chain is Charged multivesicular body protein 4b (chmp4b) from Xenopus laevis (African clawed frog).